We begin with the raw amino-acid sequence, 89 residues long: UPF0297 protein SEQ_2150 (89 aa).

It belongs to the UPF0297 family.

The sequence is that of UPF0297 protein SEQ_2150 from Streptococcus equi subsp. equi (strain 4047).